Here is a 304-residue protein sequence, read N- to C-terminus: Glutaminase (304 aa).

Ser-63, Asn-113, Glu-157, Asn-164, Tyr-188, Tyr-240, and Val-258 together coordinate substrate.

The protein belongs to the glutaminase family. Homotetramer.

It catalyses the reaction L-glutamine + H2O = L-glutamate + NH4(+). The polypeptide is Glutaminase (Chromobacterium violaceum (strain ATCC 12472 / DSM 30191 / JCM 1249 / CCUG 213 / NBRC 12614 / NCIMB 9131 / NCTC 9757 / MK)).